We begin with the raw amino-acid sequence, 60 residues long: Disagregin (60 aa).

The short motif at 14 to 16 (RED) is the Cell attachment site; atypical element.

As to expression, expressed in salivary glands.

The protein localises to the secreted. Functionally, tick salivary platelet aggregation inhibitor that plays an important part in the anti-hemostatic strategy of ticks. Inhibits fibrinogen interaction with platelets. Acts by binding (in a divalent metal ion dependent manner) to the glycoprotein IIb-IIIa receptor (ITGA2B/ITGB3) on the platelet surface and inhibits aggregation induced by ADP (IC(50)=99-104 nM), thrombin, collagen (IC(50)=64 nM) platelet-activating factor and collagen. Interacts to unstimulated platelets (Kd=42.5 nM) and to ADP-stimulated platelets (Kd=39.4 nM). In contrast to many disintegrins which only interact with the beta-3 subunit, interacts with the two subunits (alpha-IIb and beta-3). Under flow conditions, reduces and delays platelet adhesion, aggregation, and fibrin formation. This is Disagregin from Ornithodoros moubata (Soft tick).